We begin with the raw amino-acid sequence, 299 residues long: Phosphatidylserine decarboxylase proenzyme (299 aa).

Catalysis depends on charge relay system; for autoendoproteolytic cleavage activity residues Asp115, His171, and Ser258. Ser258 functions as the Schiff-base intermediate with substrate; via pyruvic acid; for decarboxylase activity in the catalytic mechanism. Pyruvic acid (Ser); by autocatalysis is present on Ser258.

It belongs to the phosphatidylserine decarboxylase family. PSD-B subfamily. Prokaryotic type II sub-subfamily. Heterodimer of a large membrane-associated beta subunit and a small pyruvoyl-containing alpha subunit. Pyruvate serves as cofactor. In terms of processing, is synthesized initially as an inactive proenzyme. Formation of the active enzyme involves a self-maturation process in which the active site pyruvoyl group is generated from an internal serine residue via an autocatalytic post-translational modification. Two non-identical subunits are generated from the proenzyme in this reaction, and the pyruvate is formed at the N-terminus of the alpha chain, which is derived from the carboxyl end of the proenzyme. The autoendoproteolytic cleavage occurs by a canonical serine protease mechanism, in which the side chain hydroxyl group of the serine supplies its oxygen atom to form the C-terminus of the beta chain, while the remainder of the serine residue undergoes an oxidative deamination to produce ammonia and the pyruvoyl prosthetic group on the alpha chain. During this reaction, the Ser that is part of the protease active site of the proenzyme becomes the pyruvoyl prosthetic group, which constitutes an essential element of the active site of the mature decarboxylase.

Its subcellular location is the cell membrane. The enzyme catalyses a 1,2-diacyl-sn-glycero-3-phospho-L-serine + H(+) = a 1,2-diacyl-sn-glycero-3-phosphoethanolamine + CO2. Its pathway is phospholipid metabolism; phosphatidylethanolamine biosynthesis; phosphatidylethanolamine from CDP-diacylglycerol: step 2/2. Its function is as follows. Catalyzes the formation of phosphatidylethanolamine (PtdEtn) from phosphatidylserine (PtdSer). The chain is Phosphatidylserine decarboxylase proenzyme from Chlamydia felis (strain Fe/C-56) (Chlamydophila felis).